Here is a 463-residue protein sequence, read N- to C-terminus: Asparagine--tRNA ligase (463 aa).

The protein belongs to the class-II aminoacyl-tRNA synthetase family. Homodimer.

It localises to the cytoplasm. The enzyme catalyses tRNA(Asn) + L-asparagine + ATP = L-asparaginyl-tRNA(Asn) + AMP + diphosphate + H(+). This is Asparagine--tRNA ligase from Clostridium acetobutylicum (strain ATCC 824 / DSM 792 / JCM 1419 / IAM 19013 / LMG 5710 / NBRC 13948 / NRRL B-527 / VKM B-1787 / 2291 / W).